We begin with the raw amino-acid sequence, 1530 residues long: Glutamate-rich protein 3 (1530 aa).

9 disordered regions span residues 165-187, 408-429, 475-661, 673-724, 773-870, 923-1146, 1167-1334, 1360-1383, and 1425-1530; these read RLQP…RSRS, SLPK…KAEG, MTSK…PMPI, TEKG…GLEE, EAME…AVGL, REAA…LLGE, LENI…GMGG, LAGS…DVAE, and YTTE…NVQV. Composition is skewed to basic and acidic residues over residues 415-429, 531-545, and 552-562; these read EKST…KAEG, LDDK…KESE, and PDARDNVKDEN. Over residues 563–574 the composition is skewed to acidic residues; the sequence is DGCSESELEEDK. Residues 581-592 show a composition bias toward low complexity; sequence SSTSSRSHPYSS. The span at 600–616 shows a compositional bias: basic and acidic residues; that stretch reads VGDREAHTDSSTDESAR. Positions 638-647 are enriched in acidic residues; it reads ESLEIEIEDQ. Composition is skewed to basic and acidic residues over residues 684–717 and 773–787; these read LSEK…DKKA and EAME…RDAD. A compositionally biased stretch (low complexity) spans 834 to 845; that stretch reads GIERGAEGAAEA. A compositionally biased stretch (acidic residues) spans 943 to 958; sequence GESEEEASIDLEDTGP. 3 stretches are compositionally biased toward basic and acidic residues: residues 979-992, 1039-1116, and 1173-1212; these read EPAK…RTET, EANR…EETK, and LRKE…RQDG. A compositionally biased stretch (low complexity) spans 1213 to 1225; sequence EGALAAPEAEPAG. A compositionally biased stretch (acidic residues) spans 1289–1300; it reads AVDEDPEEEEDK. Basic and acidic residues-rich tracts occupy residues 1464–1487 and 1502–1511; these read GRQE…RELS and DFTETREKQQ. The span at 1517-1530 shows a compositional bias: polar residues; sequence ESETADVSPNNVQV.

In terms of assembly, interacts with CLTC/clathrin heavy chain 1, AP2A2/AP-2 complex subunit alpha-2, and PIK3C2A/phosphatidylinositol 4-phosphate 3-kinase C2 domain-containing subunit alpha. Expressed in dopaminergic and serotoninergic neurons.

Its subcellular location is the cell projection. It is found in the cilium. The protein localises to the cytoplasm. Component of the primary cilium that controls cilium formation and length. May function within retrograde intraflagellar transport (IFT)-associated pathways to remove signaling proteins from primary cilia. Also involved in neuronal vesicle biogenesis and neurotransmitter vesicular function. In Homo sapiens (Human), this protein is Glutamate-rich protein 3.